We begin with the raw amino-acid sequence, 321 residues long: o-succinylbenzoate synthase (321 aa).

The Proton donor role is filled by K134. Mg(2+) contacts are provided by D162, E191, and D214. Catalysis depends on K236, which acts as the Proton acceptor.

It belongs to the mandelate racemase/muconate lactonizing enzyme family. MenC type 1 subfamily. It depends on a divalent metal cation as a cofactor.

It catalyses the reaction (1R,6R)-6-hydroxy-2-succinyl-cyclohexa-2,4-diene-1-carboxylate = 2-succinylbenzoate + H2O. It participates in quinol/quinone metabolism; 1,4-dihydroxy-2-naphthoate biosynthesis; 1,4-dihydroxy-2-naphthoate from chorismate: step 4/7. Its pathway is quinol/quinone metabolism; menaquinone biosynthesis. Its function is as follows. Converts 2-succinyl-6-hydroxy-2,4-cyclohexadiene-1-carboxylate (SHCHC) to 2-succinylbenzoate (OSB). This chain is o-succinylbenzoate synthase, found in Klebsiella pneumoniae (strain 342).